Consider the following 258-residue polypeptide: UPF0246 protein Pnap_3166 (258 aa).

It belongs to the UPF0246 family.

The protein is UPF0246 protein Pnap_3166 of Polaromonas naphthalenivorans (strain CJ2).